The sequence spans 350 residues: (S)-tetrahydroprotoberberine N-methyltransferase (350 aa).

S-adenosyl-L-methionine-binding residues include Ser-91, Gly-129, Asn-153, Gln-157, Asp-179, Val-180, and Val-195. Cys-325 is an active-site residue.

It belongs to the CFA/CMAS family. As to quaternary structure, homodimer.

The protein localises to the cytoplasm. It carries out the reaction (S)-stylopine + S-adenosyl-L-methionine = (S)-cis-N-methylstylopine + S-adenosyl-L-homocysteine. It catalyses the reaction (S)-tetrahydropalmatine + S-adenosyl-L-methionine = (S)-cis-N-methyltetrahydropalmatine + S-adenosyl-L-homocysteine. The catalysed reaction is (S)-canadine + S-adenosyl-L-methionine = (S)-cis-N-methylcanadine + S-adenosyl-L-homocysteine. The enzyme catalyses (S)-scoulerine + S-adenosyl-L-methionine = (S)-cis-N-methylscoulerine + S-adenosyl-L-homocysteine. The protein operates within alkaloid biosynthesis. Functionally, N-methyltransferase with a broad substrate range, accepting protoberberine alkaloids (R,S)-stylopine, (R,S)-nandinine and (R,S)-tetrahydropalmatine, and to a lesser extent (R,S)-canadine, (R,S)-tetrahydrogroenlandicine (cheilanthifoline) and (S)-scoulerine. This is (S)-tetrahydroprotoberberine N-methyltransferase from Eschscholzia californica (California poppy).